Here is a 542-residue protein sequence, read N- to C-terminus: Putative inactive cadmium/zinc-transporting ATPase HMA3 (542 aa).

The Cytoplasmic portion of the chain corresponds to 1-89 (MAEGEESKKM…VRPYGETSLK (89 aa)). Residues 13–79 (QTSYFDVVGI…ALNQARLEAS (67 aa)) form the HMA domain. The chain crosses the membrane as a helical span at residues 90-111 (SQWPSPFAIVSGVLLVLSFFKY). The Extracellular segment spans residues 112-114 (FYS). A helical transmembrane segment spans residues 115–134 (PLEWLAIVAVVAGVFPILAK). The Cytoplasmic segment spans residues 135 to 141 (AVASVTR). Residues 142-162 (FRLDINALTLIAVIATLCMQD) form a helical membrane-spanning segment. Residue Phe163 is a topological domain, extracellular. A helical transmembrane segment spans residues 164–184 (TEAATIVFLFSVADWLESSAA). Residues 185–310 (HKASIVMSSL…QTKTQRFIDK (126 aa)) are Cytoplasmic-facing. The chain crosses the membrane as a helical span at residues 311–333 (CSRYYTPAVVVSAACFAVIPVLL). At 334–341 (KVQDLSHW) the chain is on the extracellular side. The helical transmembrane segment at 342–359 (FHLALVVLVSGCPCGLIL) threads the bilayer. Residues 360–542 (STPVATFCAL…VAQALKELKS (183 aa)) lie on the Cytoplasmic side of the membrane.

Belongs to the cation transport ATPase (P-type) (TC 3.A.3) family. Type IB subfamily.

It localises to the membrane. This Arabidopsis thaliana (Mouse-ear cress) protein is Putative inactive cadmium/zinc-transporting ATPase HMA3 (HMA3).